The sequence spans 255 residues: 5-oxoprolinase subunit A (255 aa).

This sequence belongs to the LamB/PxpA family. As to quaternary structure, forms a complex composed of PxpA, PxpB and PxpC.

It carries out the reaction 5-oxo-L-proline + ATP + 2 H2O = L-glutamate + ADP + phosphate + H(+). In terms of biological role, catalyzes the cleavage of 5-oxoproline to form L-glutamate coupled to the hydrolysis of ATP to ADP and inorganic phosphate. The sequence is that of 5-oxoprolinase subunit A from Pyrococcus furiosus (strain ATCC 43587 / DSM 3638 / JCM 8422 / Vc1).